The chain runs to 1295 residues: Phosphoribosylformylglycinamidine synthase (1295 aa).

Residues 305 to 327 (WPGAATGSGGEIRDEGATGRGAK) are disordered. Residues 307-318 (GAATGSGGEIRD), 386-388 (TGY), and Ala678 contribute to the ATP site. 4 residues coordinate Mg(2+): Asp679, Glu718, Asn722, and Asp884. ATP is bound at residue Ser886. Residues 1042-1295 (VAVLREQGVN…IFRNARKQLG (254 aa)) form the Glutamine amidotransferase type-1 domain. The active-site Nucleophile is the Cys1135. Active-site residues include His1260 and Glu1262.

The protein in the N-terminal section; belongs to the FGAMS family. As to quaternary structure, monomer.

The protein localises to the cytoplasm. It catalyses the reaction N(2)-formyl-N(1)-(5-phospho-beta-D-ribosyl)glycinamide + L-glutamine + ATP + H2O = 2-formamido-N(1)-(5-O-phospho-beta-D-ribosyl)acetamidine + L-glutamate + ADP + phosphate + H(+). It participates in purine metabolism; IMP biosynthesis via de novo pathway; 5-amino-1-(5-phospho-D-ribosyl)imidazole from N(2)-formyl-N(1)-(5-phospho-D-ribosyl)glycinamide: step 1/2. Phosphoribosylformylglycinamidine synthase involved in the purines biosynthetic pathway. Catalyzes the ATP-dependent conversion of formylglycinamide ribonucleotide (FGAR) and glutamine to yield formylglycinamidine ribonucleotide (FGAM) and glutamate. This Salmonella paratyphi A (strain ATCC 9150 / SARB42) protein is Phosphoribosylformylglycinamidine synthase.